The chain runs to 245 residues: UPF0246 protein CE1889 (245 aa).

The disordered stretch occupies residues 1 to 20 (MLILLPPSETKTPGGAGAPL).

It belongs to the UPF0246 family.

This chain is UPF0246 protein CE1889, found in Corynebacterium efficiens (strain DSM 44549 / YS-314 / AJ 12310 / JCM 11189 / NBRC 100395).